Here is a 294-residue protein sequence, read N- to C-terminus: HTH-type transcriptional activator AmpR (294 aa).

An HTH lysR-type domain is found at I6–T63. The H-T-H motif DNA-binding region spans F23–K42.

The protein belongs to the LysR transcriptional regulatory family.

Its subcellular location is the cytoplasm. In terms of biological role, this protein is a positive regulator of gene expression of beta-lactamase (AmpC). This is HTH-type transcriptional activator AmpR (ampR) from Yersinia enterocolitica.